The primary structure comprises 470 residues: Adenosylhomocysteinase (470 aa).

Substrate is bound by residues threonine 61, aspartate 136, and glutamate 196. 197 to 199 contributes to the NAD(+) binding site; sequence TTT. Residues lysine 226 and aspartate 230 each contribute to the substrate site. NAD(+) is bound by residues asparagine 231, 260–265, glutamate 283, asparagine 318, 339–341, and asparagine 384; these read GYGDVG and IGH.

It belongs to the adenosylhomocysteinase family. NAD(+) is required as a cofactor.

It is found in the cytoplasm. The catalysed reaction is S-adenosyl-L-homocysteine + H2O = L-homocysteine + adenosine. The protein operates within amino-acid biosynthesis; L-homocysteine biosynthesis; L-homocysteine from S-adenosyl-L-homocysteine: step 1/1. May play a key role in the regulation of the intracellular concentration of adenosylhomocysteine. This Aromatoleum aromaticum (strain DSM 19018 / LMG 30748 / EbN1) (Azoarcus sp. (strain EbN1)) protein is Adenosylhomocysteinase.